Consider the following 460-residue polypeptide: Argininosuccinate lyase (460 aa).

Belongs to the lyase 1 family. Argininosuccinate lyase subfamily.

Its subcellular location is the cytoplasm. It carries out the reaction 2-(N(omega)-L-arginino)succinate = fumarate + L-arginine. It participates in amino-acid biosynthesis; L-arginine biosynthesis; L-arginine from L-ornithine and carbamoyl phosphate: step 3/3. The chain is Argininosuccinate lyase from Campylobacter hominis (strain ATCC BAA-381 / DSM 21671 / CCUG 45161 / LMG 19568 / NCTC 13146 / CH001A).